Reading from the N-terminus, the 680-residue chain is Lipase 1 (680 aa).

The signal sequence occupies residues 1-34 (MKSQNKYSIRKFSVGASSILIATLLFLSGGQAQA). Residues 35–290 (AEKQVNMGNS…AKAKGDQTNK (256 aa)) constitute a propeptide that is removed on maturation. Disordered stretches follow at residues 39-58 (VNMG…GDQQ) and 82-260 (KNLH…KNGL). The segment covering 40-58 (NMGNSQEDTVTAQSIGDQQ) has biased composition (polar residues). Residues 84 to 112 (LHNDKTISEENHRKTDDLNKDQLKDDKKS) show a composition bias toward basic and acidic residues. Polar residues-rich tracts occupy residues 162–193 (SQDL…SQRE) and 204–223 (QPQQ…FNNE). Basic and acidic residues predominate over residues 224–234 (QEVKPQKDEKT). The span at 235–246 (LSVSDLKNNQKS) shows a compositional bias: polar residues. Serine 408 acts as the Nucleophile in catalysis. Aspartate 600 functions as the Charge relay system in the catalytic mechanism. Residue aspartate 638 coordinates Ca(2+). Histidine 639 acts as the Charge relay system in catalysis. Positions 641, 646, and 649 each coordinate Ca(2+).

It belongs to the AB hydrolase superfamily. Lipase family.

It is found in the secreted. The catalysed reaction is a triacylglycerol + H2O = a diacylglycerol + a fatty acid + H(+). This is Lipase 1 (lip1) from Staphylococcus aureus (strain MRSA252).